Consider the following 201-residue polypeptide: Recombination protein RecR (201 aa).

A C4-type zinc finger spans residues 57–72 (CADCRTFTEQPVCTIC). The region spanning 81–176 (GQICVVESPA…MASRIAHGVP (96 aa)) is the Toprim domain.

Belongs to the RecR family.

May play a role in DNA repair. It seems to be involved in an RecBC-independent recombinational process of DNA repair. It may act with RecF and RecO. In Sodalis glossinidius (strain morsitans), this protein is Recombination protein RecR.